A 618-amino-acid polypeptide reads, in one-letter code: Very-long-chain aldehyde decarbonylase GL1-3 (618 aa).

7 helical membrane passes run 9 to 29 (LSSW…GPVV), 46 to 66 (TSWC…MLFF), 91 to 111 (MVIM…FPAT), 121 to 141 (GWAI…YWAH), 174 to 194 (LESL…FMAG), 289 to 309 (DFVF…PFAF), and 315 to 335 (LPFA…GFML). The Fatty acid hydroxylase domain maps to 127-267 (VLHVAVSEPA…MPLFDALGGT (141 aa)).

This sequence belongs to the sterol desaturase family. As to quaternary structure, homodimer. In terms of tissue distribution, expressed in germinating seeds and stamens.

The protein resides in the endoplasmic reticulum membrane. It catalyses the reaction a long-chain fatty aldehyde + 2 NADPH + O2 + H(+) = a long-chain alkane + formate + 2 NADP(+) + H2O. Aldehyde decarbonylase involved in the conversion of aldehydes to alkanes. Core component of a very-long-chain alkane synthesis complex. The sequence is that of Very-long-chain aldehyde decarbonylase GL1-3 from Oryza sativa subsp. japonica (Rice).